We begin with the raw amino-acid sequence, 362 residues long: Flagellar P-ring protein (362 aa).

A signal peptide spans 1–18 (MKHIALIVLYFLSFSVQA).

Belongs to the FlgI family. The basal body constitutes a major portion of the flagellar organelle and consists of four rings (L,P,S, and M) mounted on a central rod.

Its subcellular location is the periplasm. It localises to the bacterial flagellum basal body. In terms of biological role, assembles around the rod to form the L-ring and probably protects the motor/basal body from shearing forces during rotation. The polypeptide is Flagellar P-ring protein (Marinomonas sp. (strain MWYL1)).